The sequence spans 300 residues: Mitochondrial tricarboxylate transporter 1 (300 aa).

Solcar repeat units lie at residues Val-8–Met-98, Leu-107–Trp-197, and Ile-209–Leu-294. 6 helical membrane-spanning segments follow: residues Ser-11 to Ile-31, Pro-67 to Val-87, Leu-114 to Ile-134, Gly-172 to Tyr-191, Leu-208 to Gly-228, and Leu-277 to Gly-297.

It belongs to the mitochondrial carrier (TC 2.A.29) family.

It localises to the mitochondrion membrane. Functionally, mitochondrial tricarboxylate transporter; part of the gene cluster that mediates the biosynthesis of itaconic acid and 2-hydroxyparaconate. Cis-aconitate is secreted by the mitochondrial tricarboxylate transporter MTT1. In the cytosol cis-aconitate is converted into trans-aconitate via isomerization by the aconitate-delta-isomerase ADI1. Decarboxylation of trans-aconitate by the trans-aconitate decarboxylase TAD1 then leads then to the production of itaconic acid. The cytochrome P450 monooxygenase CYP3 further converts itaconate to 2-hydroxyparaconate via oxidation of the double bond, leading to a transient epoxide, which can subsequently be lactonized to produce 2-hydroxyparaconate. Secretion of itaconate and possibly 2-hydroxyparaconate into the medium is mediated by the major facilitator ITP1. The glyoxalase domain-containing protein RDO1 is not involved in the biosynthesis of itaconate and 2-hydroxyparaconate, however, it might play a role in the further conversion of 2-hydroxyparaconate to itatartarate. This Mycosarcoma maydis (Corn smut fungus) protein is Mitochondrial tricarboxylate transporter 1.